A 157-amino-acid polypeptide reads, in one-letter code: UPF0756 membrane protein ABC2716 (157 aa).

4 helical membrane-spanning segments follow: residues 8-28, 54-74, 84-104, and 117-137; these read FLLLLMAIALIAKNQSLIIAI, LGVTIITIAVLVPIATGDIGF, LYAWVALGSGIAVALVAASGI, and LVLGTIVAVSFLNGVAVGPLI.

The protein belongs to the UPF0756 family.

It is found in the cell membrane. This Shouchella clausii (strain KSM-K16) (Alkalihalobacillus clausii) protein is UPF0756 membrane protein ABC2716.